Reading from the N-terminus, the 305-residue chain is UDP-3-O-acyl-N-acetylglucosamine deacetylase (305 aa).

Residues H78, H237, and D241 each coordinate Zn(2+). H264 (proton donor) is an active-site residue.

It belongs to the LpxC family. Zn(2+) serves as cofactor.

The catalysed reaction is a UDP-3-O-[(3R)-3-hydroxyacyl]-N-acetyl-alpha-D-glucosamine + H2O = a UDP-3-O-[(3R)-3-hydroxyacyl]-alpha-D-glucosamine + acetate. Its pathway is glycolipid biosynthesis; lipid IV(A) biosynthesis; lipid IV(A) from (3R)-3-hydroxytetradecanoyl-[acyl-carrier-protein] and UDP-N-acetyl-alpha-D-glucosamine: step 2/6. Its function is as follows. Catalyzes the hydrolysis of UDP-3-O-myristoyl-N-acetylglucosamine to form UDP-3-O-myristoylglucosamine and acetate, the committed step in lipid A biosynthesis. This is UDP-3-O-acyl-N-acetylglucosamine deacetylase from Burkholderia mallei (strain NCTC 10247).